The chain runs to 670 residues: Alpha-1,4-glucan:maltose-1-phosphate maltosyltransferase (670 aa).

Alpha-maltose 1-phosphate-binding residues include Lys-262, Gln-322, and Asp-357. Asp-393 (nucleophile) is an active-site residue. Asn-394 is an alpha-maltose 1-phosphate binding site. The active-site Proton donor is the Glu-422. Lys-534–Tyr-535 serves as a coordination point for alpha-maltose 1-phosphate.

Belongs to the glycosyl hydrolase 13 family. GlgE subfamily. In terms of assembly, homodimer.

The enzyme catalyses alpha-maltose 1-phosphate + [(1-&gt;4)-alpha-D-glucosyl](n) = [(1-&gt;4)-alpha-D-glucosyl](n+2) + phosphate. Functionally, maltosyltransferase that uses maltose 1-phosphate (M1P) as the sugar donor to elongate linear or branched alpha-(1-&gt;4)-glucans. Is involved in a branched alpha-glucan biosynthetic pathway from trehalose, together with TreS, Mak and GlgB. The sequence is that of Alpha-1,4-glucan:maltose-1-phosphate maltosyltransferase from Chlorobaculum tepidum (strain ATCC 49652 / DSM 12025 / NBRC 103806 / TLS) (Chlorobium tepidum).